The sequence spans 270 residues: 3-methyl-2-oxobutanoate hydroxymethyltransferase (270 aa).

Mg(2+)-binding residues include Asp-50 and Asp-89. 3-methyl-2-oxobutanoate is bound by residues 50-51 (DS), Asp-89, and Lys-118. Glu-120 is a binding site for Mg(2+). Glu-187 functions as the Proton acceptor in the catalytic mechanism.

It belongs to the PanB family. Homodecamer; pentamer of dimers. Mg(2+) is required as a cofactor.

Its subcellular location is the cytoplasm. It catalyses the reaction 3-methyl-2-oxobutanoate + (6R)-5,10-methylene-5,6,7,8-tetrahydrofolate + H2O = 2-dehydropantoate + (6S)-5,6,7,8-tetrahydrofolate. It participates in cofactor biosynthesis; (R)-pantothenate biosynthesis; (R)-pantoate from 3-methyl-2-oxobutanoate: step 1/2. In terms of biological role, catalyzes the reversible reaction in which hydroxymethyl group from 5,10-methylenetetrahydrofolate is transferred onto alpha-ketoisovalerate to form ketopantoate. The chain is 3-methyl-2-oxobutanoate hydroxymethyltransferase from Helicobacter pylori (strain ATCC 700392 / 26695) (Campylobacter pylori).